The chain runs to 129 residues: Small ribosomal subunit protein uS11 (129 aa).

It belongs to the universal ribosomal protein uS11 family. Part of the 30S ribosomal subunit. Interacts with proteins S7 and S18. Binds to IF-3.

Its function is as follows. Located on the platform of the 30S subunit, it bridges several disparate RNA helices of the 16S rRNA. Forms part of the Shine-Dalgarno cleft in the 70S ribosome. In Nitratidesulfovibrio vulgaris (strain DSM 19637 / Miyazaki F) (Desulfovibrio vulgaris), this protein is Small ribosomal subunit protein uS11.